The primary structure comprises 249 residues: Tetrahydromethanopterin S-methyltransferase subunit A (249 aa).

The Cytoplasmic portion of the chain corresponds to 2-225; that stretch reads PEKAEPAEGW…YMAGYLSGRT (224 aa). H88 serves as a coordination point for 5-hydroxybenzimidazolylcob(I)amide. A helical membrane pass occupies residues 226 to 246; the sequence is MGLLIGIISGMIFLFLPMVVL. At 247–249 the chain is on the extracellular side; sequence GGV.

This sequence belongs to the MtrA family. As to quaternary structure, the complex is composed of 8 subunits; MtrA, MtrB, MtrC, MtrD, MtrE, MtrF, MtrG and MtrH. 5-hydroxybenzimidazolylcob(I)amide serves as cofactor.

It is found in the cell membrane. It catalyses the reaction 5-methyl-5,6,7,8-tetrahydromethanopterin + coenzyme M + 2 Na(+)(in) = 5,6,7,8-tetrahydromethanopterin + methyl-coenzyme M + 2 Na(+)(out). The protein operates within one-carbon metabolism; methanogenesis from CO(2); methyl-coenzyme M from 5,10-methylene-5,6,7,8-tetrahydromethanopterin: step 2/2. Functionally, part of a complex that catalyzes the formation of methyl-coenzyme M and tetrahydromethanopterin from coenzyme M and methyl-tetrahydromethanopterin. This is an energy-conserving, sodium-ion translocating step. The sequence is that of Tetrahydromethanopterin S-methyltransferase subunit A from Methanopyrus kandleri (strain AV19 / DSM 6324 / JCM 9639 / NBRC 100938).